The primary structure comprises 349 residues: 3'-5' exoribonuclease 1 (349 aa).

Basic and acidic residues-rich tracts occupy residues 1–10 (MEDPQSKEPA) and 22–35 (PRPE…RPSP). The interval 1 to 48 (MEDPQSKEPAGEAVALALLESPRPEGGEEPPRPSPEETQQCKFDGQET) is disordered. Ser-59 and Ser-62 each carry phosphoserine. Residues 76–110 (INRMSKEELRAKLSEFKLETRGVKDVLKKRLKNYY) enclose the SAP domain. The 177-residue stretch at 130-306 (ICIIDFEATC…DDSKNIARIA (177 aa)) folds into the Exonuclease domain. Mg(2+) is bound by residues Asp-134 and Glu-136. Catalysis depends on Glu-136, which acts as the Proton acceptor. Positions 136 and 137 each coordinate AMP. Mg(2+) is bound at residue Asp-234. His-293 (proton acceptor) is an active-site residue. Position 293 (His-293) interacts with AMP. Position 298 (Asp-298) interacts with Mg(2+).

In terms of assembly, identified in a histone pre-mRNA complex, at least composed of ERI1, LSM11, SLBP, SNRPB, SYNCRIP and YBX1. Interacts in a cooperative manner with SLBP to the mature 3'-end of histone mRNAs. Binds to 40S and 60S ribosomal subunits and to 80S assembled ribosomes. Found in a ternary complex with SLBP and the stem-loop structure of the 3'-end of histone mRNAs. Mg(2+) serves as cofactor.

It is found in the cytoplasm. It localises to the nucleus. Its subcellular location is the nucleolus. It carries out the reaction Exonucleolytic cleavage in the 3'- to 5'-direction to yield nucleoside 5'-phosphates.. Its activity is regulated as follows. Although it can bind simultaneously with SLBP to the 3'-end of histone mRNA, the presence of SLBP prevents the exonuclease activity. Its function is as follows. RNA exonuclease that binds to the 3'-end of histone mRNAs and degrades them, suggesting that it plays an essential role in histone mRNA decay after replication. A 2' and 3'-hydroxyl groups at the last nucleotide of the histone 3'-end is required for efficient 3'-end histone mRNA exonuclease activity and degradation of RNA substrates. Also able to degrade the 3'-overhangs of short interfering RNAs (siRNAs) in vitro, suggesting a possible role as regulator of RNA interference (RNAi). Required for binding the 5'-ACCCA-3' sequence present in stem-loop structure. Able to bind other mRNAs. Required for 5.8S rRNA 3'-end processing. Also binds to 5.8s ribosomal RNA. Binds with high affinity to the stem-loop structure of replication-dependent histone pre-mRNAs. In vitro, does not have sequence specificity. In vitro, has weak DNA exonuclease activity. In vitro, shows biphasic kinetics such that there is rapid hydrolysis of the last three unpaired RNA nucleotides in the 39 flanking sequence followed by a much slower cleavage through the stem that occurs over a longer incubation period in the order of hours. ERI1-mediated RNA metabolism plays a key role in chondrogenesis. This Homo sapiens (Human) protein is 3'-5' exoribonuclease 1.